A 53-amino-acid chain; its full sequence is Ovomucoid (53 aa).

The 51-residue stretch at 3–53 folds into the Kazal-like domain; the sequence is VDCSEYPQPTCTTEHRPVCGSNNETYGNKCNFCNAVVKSNGTLTVSHFGKC. Disulfide bonds link cysteine 5-cysteine 35, cysteine 13-cysteine 32, and cysteine 21-cysteine 53. N-linked (GlcNAc...) asparagine glycosylation occurs at asparagine 42.

It localises to the secreted. The polypeptide is Ovomucoid (Polyplectron bicalcaratum (Grey peacock-pheasant)).